The chain runs to 237 residues: Uridylate kinase (237 aa).

10–13 (KLSG) lines the ATP pocket. G51 is a UMP binding site. Residues G52 and R56 each contribute to the ATP site. UMP-binding positions include D71 and 133–140 (TGNPCFTT). ATP is bound by residues T160, Y166, and D169.

It belongs to the UMP kinase family. Homohexamer.

Its subcellular location is the cytoplasm. The catalysed reaction is UMP + ATP = UDP + ADP. Its pathway is pyrimidine metabolism; CTP biosynthesis via de novo pathway; UDP from UMP (UMPK route): step 1/1. With respect to regulation, inhibited by UTP. Functionally, catalyzes the reversible phosphorylation of UMP to UDP. This chain is Uridylate kinase, found in Vesicomyosocius okutanii subsp. Calyptogena okutanii (strain HA).